A 280-amino-acid chain; its full sequence is UPF0494 membrane protein SPAC212.01c (280 aa).

4 helical membrane-spanning segments follow: residues 107–127, 144–164, 178–198, and 199–219; these read WPLLIIWSIIIVFAVDKKFEV, IWVPIAIYVCLLVLMLLSLIF, VIIAVLGAVLGMIIAVLGMII, and AALGMIIAALGATITGLLYFG.

The protein belongs to the UPF0494 family.

Its subcellular location is the membrane. The chain is UPF0494 membrane protein SPAC212.01c from Schizosaccharomyces pombe (strain 972 / ATCC 24843) (Fission yeast).